Reading from the N-terminus, the 345-residue chain is C5a anaphylatoxin chemotactic receptor 1 (345 aa).

Residues 1–32 (MMVTVSYDYDYNSTFLPDGFVDNYVERLSFGD) lie on the Extracellular side of the membrane. A sulfotyrosine mark is found at tyrosine 9 and tyrosine 11. The N-linked (GlcNAc...) asparagine glycan is linked to asparagine 12. Residues 33–59 (LVAVVIMVVVFLVGVPGNALVVWVTAC) form a helical membrane-spanning segment. The Cytoplasmic portion of the chain corresponds to 60 to 64 (EARRH). Residues 65-88 (INAIWFLNLAAADLLSCLALPILL) form a helical membrane-spanning segment. Over 89–105 (VSTVHLNHWYFGDTACK) the chain is Extracellular. Cysteine 104 and cysteine 183 are disulfide-bonded. A helical transmembrane segment spans residues 106–127 (VLPSLILLNMYTSILLLATISA). Residues 128 to 148 (DRLLLVLSPIWCQRFRGGCLA) lie on the Cytoplasmic side of the membrane. The helical transmembrane segment at 149–169 (WTACGLAWVLALLLSSPSFLY) threads the bilayer. At 170 to 195 (RRTHNEHFSFKVYCVTDYGRDISKER) the chain is on the extracellular side. The helical transmembrane segment at 196–221 (AVALVRLLVGFIVPLITLTACYTFLL) threads the bilayer. At 222–237 (LRTWSRKATRSAKTVK) the chain is on the cytoplasmic side. Residues 238–260 (VVVAVVSSFFVFWLPYQVTGILL) traverse the membrane as a helical segment. Residues 261-277 (AWHSPNSATYRNTKALD) are Extracellular-facing. A helical membrane pass occupies residues 278-298 (AVCVAFAYINCCINPIIYVVA). Over 299-345 (GHGFQGRLLKSLPSVLRNVLTEESLDKRHQSFARSTVDTMPQKSESV) the chain is Cytoplasmic. 5 positions are modified to phosphoserine: serine 309, serine 312, serine 322, serine 329, and serine 333.

Belongs to the G-protein coupled receptor 1 family. As to quaternary structure, homodimer. May also form higher-order oligomers. Interacts (when phosphorylated) with ARRB1 and ARRB2; the interaction is associated with internalization of C5aR. Sulfation plays a critical role in the association of C5aR with C5a, but no significant role in the ability of the receptor to transduce a signal and mobilize calcium in response to a small peptide agonist. Post-translationally, phosphorylated on serine residues in response to C5a binding, resulting in internalization of the receptor and short-term desensitization to C5a. As to expression, expressed strongly in macrophages and spleen. Weak expression detected in lung, liver, brain, heart and kidney.

The protein localises to the cell membrane. Its subcellular location is the cytoplasmic vesicle. Functionally, receptor for the chemotactic and inflammatory peptide anaphylatoxin C5a. The ligand interacts with at least two sites on the receptor: a high-affinity site on the extracellular N-terminus, and a second site in the transmembrane region which activates downstream signaling events. Receptor activation stimulates chemotaxis, granule enzyme release, intracellular calcium release and superoxide anion production. This Cavia porcellus (Guinea pig) protein is C5a anaphylatoxin chemotactic receptor 1 (C5AR1).